We begin with the raw amino-acid sequence, 825 residues long: Interleukin-4 receptor subunit alpha (825 aa).

The first 25 residues, 1–25 (MGWLCSGLLFPVSCLVLLQVASSGN), serve as a signal peptide directing secretion. Topologically, residues 26–232 (MKVLQEPTCV…NSYREPFEQH (207 aa)) are extracellular. Cys34 and Cys44 are disulfide-bonded. A glycan (N-linked (GlcNAc...) asparagine) is linked at Asn53. Cysteines 74 and 86 form a disulfide. N-linked (GlcNAc...) asparagine glycans are attached at residues Asn98, Asn128, Asn134, Asn176, and Asn209. The Fibronectin type-III domain occupies 125 to 224 (APGNLTVHTN…WSPSTKWHNS (100 aa)). The WSXWS motif motif lies at 212–216 (WSEWS). A helical transmembrane segment spans residues 233 to 256 (LLLGVSVSCIVILAVCLLCYVSIT). At 257 to 825 (KIKKEWWDQI…SVGPTYMRVS (569 aa)) the chain is on the cytoplasmic side. The Box 1 motif signature appears at 262 to 270 (WWDQIPNPA). 2 disordered regions span residues 373-397 (EEEE…DFQE) and 433-485 (LPPS…LTCT). The required for IRS1 activation and IL4-induced cell growth stretch occupies residues 437 to 557 (GSTSAHMPWD…ETWEQILRRN (121 aa)). Polar residues predominate over residues 475 to 485 (PTQSPDNLTCT). Phosphotyrosine occurs at positions 497, 575, 603, and 631. The segment at 558 to 657 (VLQHGAAAAP…VPVPLFTFGL (100 aa)) is required for IL4-induced gene expression. The disordered stretch occupies residues 651-703 (PLFTFGLDREPPRSPQSSHLPSSSPEHLGLEPGEKVEDMPKPPLPQEQATDPL). The span at 665 to 677 (PQSSHLPSSSPEH) shows a compositional bias: low complexity. A compositionally biased stretch (basic and acidic residues) spans 678 to 690 (LGLEPGEKVEDMP). An ITIM motif motif is present at residues 711–716 (IVYSAL). The interval 782 to 809 (PSGISEKSKSSSSFHPAPGNAQSSSQTP) is disordered.

It belongs to the type I cytokine receptor family. Type 4 subfamily. In terms of assembly, the functional IL4 receptor is formed by initial binding of IL4 to IL4R. Subsequent recruitment to the complex of the common gamma chain, in immune cells, creates a type I receptor and, in non-immune cells, of IL13RA1 forms a type II receptor. IL4R can also interact with the IL13/IL13RA1 complex to form a similar type II receptor. Interacts with PIK3C3. Interacts with the SH2-containing phosphatases, PTPN6/SHIP1, PTPN11/SHIP2 and INPP5D/SHIP. Interacts with JAK1 through a Box 1-containing region; inhibited by SOCS5. Interacts with SOCS5; inhibits IL4 signaling. Interacts with JAK3. Interacts with CLM1. Interacts with IL13RA2. Post-translationally, on IL4 binding, phosphorylated on C-terminal tyrosine residues. Phosphorylation on any one of tyrosine residues, Tyr-575, Tyr-603 or Tyr-631, is required for STAT6-induced gene induction. In terms of processing, the soluble form (sIL4R/IL4BP) can also be produced by proteolytic cleavage at the cell surface (shedding) by a metalloproteinase. In terms of tissue distribution, isoform 1 and isoform 2 are highly expressed in activated T-cells.

It is found in the cell membrane. It localises to the secreted. In terms of biological role, receptor for both interleukin 4 and interleukin 13. Couples to the JAK1/2/3-STAT6 pathway. The IL4 response is involved in promoting Th2 differentiation. The IL4/IL13 responses are involved in regulating IgE production and, chemokine and mucus production at sites of allergic inflammation. In certain cell types, can signal through activation of insulin receptor substrates, IRS1/IRS2. Soluble IL4R (sIL4R) inhibits IL4-mediated cell proliferation and IL5 up-regulation by T-cells. In Homo sapiens (Human), this protein is Interleukin-4 receptor subunit alpha (IL4R).